We begin with the raw amino-acid sequence, 872 residues long: Coatomer subunit gamma-2 (872 aa).

6 HEAT repeats span residues 64–101 (MEATEAFFAMTRLFQSNDQTLRRMCYLTIKEMANISED), 283–320 (RELAPAVSVLQLFCSSPKPALRYAAVRTLNKVAMKHPS), 321–355 (AVTACNLDLENLITDSNRSIATLAITTLLKTGSES), 356–392 (SVDRLMKQISTFVSEISDEFKVVVVQAISALCQKYPR), 395–430 (SVMMTFLSNMLRDDGGFEYKRAIVDCIISIIEENPD), and 467–504 (PTPSKYIRFIFNRVVLENEAVRAAAVSALAKFGAQNEP).

This sequence belongs to the COPG family. Oligomeric complex.

It is found in the cytoplasm. Its subcellular location is the golgi apparatus membrane. The protein localises to the cytoplasmic vesicle. It localises to the COPI-coated vesicle membrane. Its function is as follows. The coatomer is a cytosolic protein complex that binds to dilysine motifs and reversibly associates with Golgi non-clathrin-coated vesicles, which further mediate biosynthetic protein transport from the ER, via the Golgi up to the trans Golgi network. Coatomer complex is required for budding from Golgi membranes, and is essential for the retrograde Golgi-to-ER transport of dilysine-tagged proteins. This Xenopus tropicalis (Western clawed frog) protein is Coatomer subunit gamma-2 (copg2).